We begin with the raw amino-acid sequence, 597 residues long: Coronatine-insensitive protein homolog 1b (597 aa).

Positions 22-64 constitute an F-box domain; sequence SIPEEALHLVLGYVDDPRDREAVSLVCRRWHRIDALTRKHVTV. Jasmonate contacts are provided by arginine 92, arginine 353, tyrosine 391, arginine 414, and arginine 501.

In terms of assembly, interacts with TIFY10C/JAZ8 in a coronatine-dependent manner. Interacts with TIFY3/JAZ1, TIFY6A/JAZ3, TIFY6B/JAZ4, TIFY10A/JAZ6, TIFY10B/JAZ7, TIFY11A/JAZ9, TIFY11B/JAZ10, TIFY11C/JAZ11 and TIFY11D/JAZ12 in a coronatine-dependent manner. Expressed in roots, shoots, leaf sheaths and leaf blades.

In terms of biological role, involved in jasmonate (JA) signaling. Required for jasmonate signaling in plant defense responses. Can complement Arabidopsis coi1-1 mutant and restore jasmonate signaling. Component of SCF(COI1) E3 ubiquitin ligase complexes, which may mediate the ubiquitination and subsequent proteasomal degradation of target proteins, including TIFY/JAZ family. The chain is Coronatine-insensitive protein homolog 1b from Oryza sativa subsp. japonica (Rice).